Here is a 775-residue protein sequence, read N- to C-terminus: Endothelin-converting enzyme-like 1 (775 aa).

The Cytoplasmic segment spans residues 1 to 61 (MEAPYSMTAH…LPRWNRREVC (61 aa)). The tract at residues 30-52 (GTSLPPGFPRGSGRSASGSRSGL) is disordered. The span at 32-52 (SLPPGFPRGSGRSASGSRSGL) shows a compositional bias: low complexity. The helical; Signal-anchor for type II membrane protein transmembrane segment at 62 to 82 (LLSGLVFAAGLCAILAAMLAL) threads the bilayer. The Lumenal segment spans residues 83 to 775 (KYLGPGAAGG…MNPVHKCSVW (693 aa)). Residues 99–775 (GCPERKAFAR…MNPVHKCSVW (677 aa)) form the Peptidase M13 domain. 4 disulfide bridges follow: Cys124–Cys760, Cys132–Cys720, Cys188–Cys441, and Cys649–Cys772. N-linked (GlcNAc...) asparagine glycans are attached at residues Asn255 and Asn322. His612 is a Zn(2+) binding site. Residue Glu613 is part of the active site. His616 serves as a coordination point for Zn(2+). Residue Asn656 is glycosylated (N-linked (GlcNAc...) asparagine). Glu672 is a Zn(2+) binding site. Asp676 functions as the Proton donor in the catalytic mechanism.

Belongs to the peptidase M13 family. It depends on Zn(2+) as a cofactor.

The protein resides in the membrane. Its function is as follows. May contribute to the degradation of peptide hormones and be involved in the inactivation of neuronal peptides. This is Endothelin-converting enzyme-like 1 (Ecel1) from Mus musculus (Mouse).